Reading from the N-terminus, the 182-residue chain is CASP-like protein 5B1 (182 aa).

Residues 1–20 (GDASHAVDHPIGGHPEHEHD) form a disordered region. Topologically, residues 1-41 (GDASHAVDHPIGGHPEHEHDLREEEGPLIFPMKDLPGTPGT) are cytoplasmic. The chain crosses the membrane as a helical span at residues 42–62 (VGGLALRMGQFIFAAASVVIM). The Extracellular portion of the chain corresponds to 63 to 73 (VTSDEFINFTA). A glycan (N-linked (GlcNAc...) asparagine) is linked at N70. A helical transmembrane segment spans residues 74–94 (FCYLAAAMALQFLWSFVLATI). The Cytoplasmic segment spans residues 95 to 108 (DVYALLIKRGLPNS). A helical transmembrane segment spans residues 109–129 (ILLSLFVVGDWVTATLSLAAA). The Extracellular segment spans residues 130 to 159 (CSTAGITVLFDKDLNYCDQMHCRRYQLSAT). The chain crosses the membrane as a helical span at residues 160-180 (MAFFSWVLIAISSLITLLLLV). Topologically, residues 181-182 (SE) are cytoplasmic.

The protein belongs to the Casparian strip membrane proteins (CASP) family. Homodimer and heterodimers.

The protein resides in the cell membrane. The polypeptide is CASP-like protein 5B1 (Picea sitchensis (Sitka spruce)).